Consider the following 332-residue polypeptide: Probable cation efflux system protein MT2084 (332 aa).

A run of 5 helical transmembrane segments spans residues 46–66, 75–95, 113–133, 145–165, and 202–222; these read ISLLVLGLTALIQIVIVVMSG, IHNFADALTAVPLWIAFALGA, AGSFVVAMITMSAIIAGYEAI, VGWVALAGLVGFIGNEWVALY, and VALGFPLADPIVGLLITAAIL.

Belongs to the cation diffusion facilitator (CDF) transporter (TC 2.A.4) family.

It is found in the cell membrane. This Mycobacterium tuberculosis (strain CDC 1551 / Oshkosh) protein is Probable cation efflux system protein MT2084.